Reading from the N-terminus, the 254-residue chain is Imidazole glycerol phosphate synthase subunit HisF (254 aa).

Catalysis depends on residues Asp11 and Asp130.

It belongs to the HisA/HisF family. Heterodimer of HisH and HisF.

The protein resides in the cytoplasm. The enzyme catalyses 5-[(5-phospho-1-deoxy-D-ribulos-1-ylimino)methylamino]-1-(5-phospho-beta-D-ribosyl)imidazole-4-carboxamide + L-glutamine = D-erythro-1-(imidazol-4-yl)glycerol 3-phosphate + 5-amino-1-(5-phospho-beta-D-ribosyl)imidazole-4-carboxamide + L-glutamate + H(+). The protein operates within amino-acid biosynthesis; L-histidine biosynthesis; L-histidine from 5-phospho-alpha-D-ribose 1-diphosphate: step 5/9. In terms of biological role, IGPS catalyzes the conversion of PRFAR and glutamine to IGP, AICAR and glutamate. The HisF subunit catalyzes the cyclization activity that produces IGP and AICAR from PRFAR using the ammonia provided by the HisH subunit. This chain is Imidazole glycerol phosphate synthase subunit HisF, found in Solibacter usitatus (strain Ellin6076).